Consider the following 242-residue polypeptide: tRNA pseudouridine synthase A (242 aa).

The active-site Nucleophile is the Asp51. Tyr107 lines the substrate pocket.

It belongs to the tRNA pseudouridine synthase TruA family. As to quaternary structure, homodimer.

The catalysed reaction is uridine(38/39/40) in tRNA = pseudouridine(38/39/40) in tRNA. In terms of biological role, formation of pseudouridine at positions 38, 39 and 40 in the anticodon stem and loop of transfer RNAs. The sequence is that of tRNA pseudouridine synthase A from Helicobacter acinonychis (strain Sheeba).